A 470-amino-acid polypeptide reads, in one-letter code: METTESTEGSLSRSCDVQPSSERLDTPSEPVPSSSSSPRSTAPAEAPAQYSVLTEPSSDSLYGAPCPPAHHRGHGFGFQPFYVSCIPQDPCNMADLSSRADPTSSYPCHSSVHGSGSGTCGLGQSSEPSQGSGPTSGPAPASVPSLVSGPDSASGPDSSASGPALASGPGPADPGQGPKFSTCIPQGYRCIPVDLAPDYNAWCQHLHWKPQRSWEPLQVSEPGVRGPYKPPEPGALGPCEPCEPCEPPEAESEETLCKARPRGQCLLYNWEEERATNQLDQIPPLQDGSESYFFRHGHQGLLTTQPQSPMSSSTTQRDSYQLPRHICQPLRGKREAMLEMLLRHQICKEVQAEQEPARKLFETESVTHHDYRVELVRAAPPASTKPHDYRQEQPETFWIQRAARLPGVSDIRTLDTPFRKNCSFSTPVPLSLGQPLPYELESGPHQVGVISSLACQGGGQGCGRTKTTPI.

Residues 1–21 (METTESTEGSLSRSCDVQPSS) are compositionally biased toward polar residues. Disordered stretches follow at residues 1–70 (METT…PPAH), 117–178 (SGTC…GQGP), and 302–321 (LTTQ…DSYQ). Over residues 27–48 (PSEPVPSSSSSPRSTAPAEAPA) the composition is skewed to low complexity. Residues 51–60 (SVLTEPSSDS) are compositionally biased toward polar residues. Composition is skewed to low complexity over residues 122 to 175 (LGQS…ADPG) and 303 to 316 (TTQP…STTQ). Mn stretches follow at residues 312–325 (SSTT…LPRH) and 364–378 (ESVT…LVRA).

This sequence belongs to the SPAG8 family. As to quaternary structure, microtubule inner protein component of sperm flagellar doublet microtubules. Interacts with FHL5 (via second LIM domain). Interacts with RANBP9. Expressed in testis (at protein level). Not detected in brain, heart, kidney, spleen, liver, lung, thymus and colon (at protein level).

The protein localises to the cytoplasm. It localises to the nucleus. It is found in the cytoplasmic vesicle. Its subcellular location is the secretory vesicle. The protein resides in the acrosome. The protein localises to the cytoskeleton. It localises to the microtubule organizing center. It is found in the spindle. Its subcellular location is the cilium axoneme. The protein resides in the flagellum axoneme. Microtubule inner protein (MIP) part of the dynein-decorated doublet microtubules (DMTs) in cilia axoneme, which is required for motile cilia beating. Plays a role in spermatogenesis by enhancing the binding of CREM isoform tau to its coactivator FHL5 and increasing the FHL5-regulated transcriptional activation of CREM isoform tau. Involved in the acrosome reaction and in binding of sperm to the zona pellucida. Plays a role in regulation of the cell cycle by controlling progression through the G2/M phase, possibly by delaying the activation of CDK1 which is required for entry into mitosis. May play a role in fertility and microtubule formation through interaction with RANBP9. This chain is Sperm-associated antigen 8, found in Mus musculus (Mouse).